Reading from the N-terminus, the 401-residue chain is Subtilisin-like protease 7 (401 aa).

A signal peptide spans 1–20 (MGFITKAIPLALAAASVING). Residues 21–119 (AEILETRAGV…IERDARVQIN (99 aa)) constitute a propeptide that is removed on maturation. Positions 36-118 (KYIVVMNDGM…YIERDARVQI (83 aa)) constitute an Inhibitor I9 domain. Asparagine 58 is a glycosylation site (N-linked (GlcNAc...) asparagine). The region spanning 129-401 (SWGLARVGSR…SKLINNGSGM (273 aa)) is the Peptidase S8 domain. Residues aspartate 161 and histidine 193 each act as charge relay system in the active site. Residues asparagine 223 and asparagine 253 are each glycosylated (N-linked (GlcNAc...) asparagine). Serine 347 (charge relay system) is an active-site residue. Asparagine 397 carries an N-linked (GlcNAc...) asparagine glycan.

The protein belongs to the peptidase S8 family.

The protein localises to the secreted. Functionally, secreted subtilisin-like serine protease with keratinolytic activity that contributes to pathogenicity. The protein is Subtilisin-like protease 7 (SUB7) of Trichophyton equinum (Horse ringworm fungus).